Here is a 447-residue protein sequence, read N- to C-terminus: Glycogen synthase (447 aa).

Position 15 (Arg-15) interacts with ADP-alpha-D-glucose.

This sequence belongs to the glycosyltransferase 1 family. Bacterial/plant glycogen synthase subfamily.

The enzyme catalyses [(1-&gt;4)-alpha-D-glucosyl](n) + ADP-alpha-D-glucose = [(1-&gt;4)-alpha-D-glucosyl](n+1) + ADP + H(+). Its pathway is glycan biosynthesis; glycogen biosynthesis. In terms of biological role, synthesizes alpha-1,4-glucan chains using ADP-glucose. In Deinococcus geothermalis (strain DSM 11300 / CIP 105573 / AG-3a), this protein is Glycogen synthase.